Consider the following 129-residue polypeptide: L-ectoine synthase (129 aa).

Belongs to the ectoine synthase family.

It carries out the reaction (2S)-4-acetamido-2-aminobutanoate = L-ectoine + H2O. It functions in the pathway amine and polyamine biosynthesis; ectoine biosynthesis; L-ectoine from L-aspartate 4-semialdehyde: step 3/3. In terms of biological role, catalyzes the circularization of gamma-N-acetyl-alpha,gamma-diaminobutyric acid (ADABA) to ectoine (1,4,5,6-tetrahydro-2-methyl-4-pyrimidine carboxylic acid), which is an excellent osmoprotectant. The sequence is that of L-ectoine synthase from Marinomonas sp. (strain MWYL1).